The primary structure comprises 493 residues: Glutamyl-tRNA(Gln) amidotransferase subunit A (493 aa).

Catalysis depends on charge relay system residues Lys78 and Ser158. The active-site Acyl-ester intermediate is Ser182.

Belongs to the amidase family. GatA subfamily. Heterotrimer of A, B and C subunits.

The enzyme catalyses L-glutamyl-tRNA(Gln) + L-glutamine + ATP + H2O = L-glutaminyl-tRNA(Gln) + L-glutamate + ADP + phosphate + H(+). In terms of biological role, allows the formation of correctly charged Gln-tRNA(Gln) through the transamidation of misacylated Glu-tRNA(Gln) in organisms which lack glutaminyl-tRNA synthetase. The reaction takes place in the presence of glutamine and ATP through an activated gamma-phospho-Glu-tRNA(Gln). The chain is Glutamyl-tRNA(Gln) amidotransferase subunit A from Rickettsia bellii (strain OSU 85-389).